A 573-amino-acid chain; its full sequence is DNA ligase (573 aa).

An ATP-binding site is contributed by glutamate 250. Residue lysine 252 is the N6-AMP-lysine intermediate of the active site. The ATP site is built by arginine 257, arginine 272, glutamate 301, phenylalanine 342, arginine 432, and lysine 438.

The protein belongs to the ATP-dependent DNA ligase family. Mg(2+) serves as cofactor.

It catalyses the reaction ATP + (deoxyribonucleotide)n-3'-hydroxyl + 5'-phospho-(deoxyribonucleotide)m = (deoxyribonucleotide)n+m + AMP + diphosphate.. In terms of biological role, DNA ligase that seals nicks in double-stranded DNA during DNA replication, DNA recombination and DNA repair. This is DNA ligase from Methanococcus maripaludis (strain C7 / ATCC BAA-1331).